Consider the following 246-residue polypeptide: Small ribosomal subunit protein uS2 (246 aa).

It belongs to the universal ribosomal protein uS2 family.

This is Small ribosomal subunit protein uS2 from Dictyoglomus turgidum (strain DSM 6724 / Z-1310).